A 112-amino-acid polypeptide reads, in one-letter code: MEKQDLEKIESDIINDWTEADDLDDALDFLFMEKVSEFKIKFKDPLKVTEEEYRELLGNYDSSNSVSSNGITIDQYTYDEDDDIMYKLEFTYRKEDNKIYIYEVQGWREKKK.

This is an uncharacterized protein from Sulfolobus islandicus filamentous virus (isolate Iceland/Hveragerdi) (SIFV).